Here is a 60-residue protein sequence, read N- to C-terminus: L-amino-acid oxidase (60 aa).

1–4 (GPMR) contributes to the FAD binding site. Substrate is bound at residue Arg-4.

It belongs to the flavin monoamine oxidase family. FIG1 subfamily. In terms of assembly, homodimer; non-covalently linked. FAD is required as a cofactor. Contains 2 disulfide bonds. Post-translationally, N-glycosylated. Expressed by the venom gland.

Its subcellular location is the secreted. It carries out the reaction an L-alpha-amino acid + O2 + H2O = a 2-oxocarboxylate + H2O2 + NH4(+). Functionally, catalyzes an oxidative deamination of predominantly hydrophobic and aromatic L-amino acids, thus producing hydrogen peroxide that may contribute to the diverse toxic effects of this enzyme. Exhibits diverse biological activities, such as hemorrhage, hemolysis, edema, apoptosis of vascular endothelial cells or tumor cell lines, antibacterial and antiparasitic activities, as well as regulation of platelet aggregation. Effects of snake L-amino oxidases on platelets are controversial, since they either induce aggregation or inhibit agonist-induced aggregation. These different effects are probably due to different experimental conditions. The polypeptide is L-amino-acid oxidase (Bitis gabonica (Gaboon adder)).